Here is an 881-residue protein sequence, read N- to C-terminus: DNA replication helicase (881 aa).

90–97 (GNAGSGKS) serves as a coordination point for ATP.

It belongs to the herpesviridae helicase family. In terms of assembly, associates with the primase and the primase-associated factor to form the helicase-primase complex.

It localises to the host nucleus. In terms of biological role, component of the helicase/primase complex. Unwinds the DNA at the replication forks and generates single-stranded DNA for both leading and lagging strand synthesis. The primase synthesizes short RNA primers on the lagging strand that the polymerase elongates using dNTPs. Possesses helicase-like motifs and therefore may act as the helicase subunit of the complex. This is DNA replication helicase from Homo sapiens (Human).